A 370-amino-acid polypeptide reads, in one-letter code: Putative methylthioribose-1-phosphate isomerase (370 aa).

Substrate contacts are provided by residues 66–68 (RGA), Arg109, and Gln217. Residue Asp258 is the Proton donor of the active site. 268 to 269 (NK) contributes to the substrate binding site.

The protein belongs to the eIF-2B alpha/beta/delta subunits family. MtnA subfamily.

It catalyses the reaction 5-(methylsulfanyl)-alpha-D-ribose 1-phosphate = 5-(methylsulfanyl)-D-ribulose 1-phosphate. In terms of biological role, catalyzes the interconversion of methylthioribose-1-phosphate (MTR-1-P) into methylthioribulose-1-phosphate (MTRu-1-P). This Aeropyrum pernix (strain ATCC 700893 / DSM 11879 / JCM 9820 / NBRC 100138 / K1) protein is Putative methylthioribose-1-phosphate isomerase.